Consider the following 419-residue polypeptide: Serine hydroxymethyltransferase (419 aa).

Residues L122 and 126 to 128 (GHL) each bind (6S)-5,6,7,8-tetrahydrofolate. The residue at position 231 (K231) is an N6-(pyridoxal phosphate)lysine. 354–356 (SPF) lines the (6S)-5,6,7,8-tetrahydrofolate pocket.

Belongs to the SHMT family. In terms of assembly, homodimer. Requires pyridoxal 5'-phosphate as cofactor.

It localises to the cytoplasm. The enzyme catalyses (6R)-5,10-methylene-5,6,7,8-tetrahydrofolate + glycine + H2O = (6S)-5,6,7,8-tetrahydrofolate + L-serine. The protein operates within one-carbon metabolism; tetrahydrofolate interconversion. It participates in amino-acid biosynthesis; glycine biosynthesis; glycine from L-serine: step 1/1. In terms of biological role, catalyzes the reversible interconversion of serine and glycine with tetrahydrofolate (THF) serving as the one-carbon carrier. This reaction serves as the major source of one-carbon groups required for the biosynthesis of purines, thymidylate, methionine, and other important biomolecules. Also exhibits THF-independent aldolase activity toward beta-hydroxyamino acids, producing glycine and aldehydes, via a retro-aldol mechanism. The protein is Serine hydroxymethyltransferase of Exiguobacterium sibiricum (strain DSM 17290 / CCUG 55495 / CIP 109462 / JCM 13490 / 255-15).